A 349-amino-acid polypeptide reads, in one-letter code: Inositol-tetrakisphosphate 1-kinase 2 (349 aa).

Positions 48 and 90 each coordinate 1D-myo-inositol 1,3,4-trisphosphate. The ATP site is built by Arg-125 and Lys-175. 1D-myo-inositol 1,3,4-trisphosphate is bound by residues His-186 and Lys-218. ATP contacts are provided by residues 207–218 (QEFVNHGGILFK) and Ser-233. Residues Asp-298, Asp-313, and Asn-315 each contribute to the Mg(2+) site. Residue Asn-315 coordinates 1D-myo-inositol 1,3,4-trisphosphate.

It belongs to the ITPK1 family. In terms of assembly, monomer. It depends on Mg(2+) as a cofactor.

The catalysed reaction is 1D-myo-inositol 3,4,5,6-tetrakisphosphate + ATP = 1D-myo-inositol 1,3,4,5,6-pentakisphosphate + ADP + H(+). The enzyme catalyses 1D-myo-inositol 1,3,4-trisphosphate + ATP = 1D-myo-inositol 1,3,4,5-tetrakisphosphate + ADP + H(+). It carries out the reaction 1D-myo-inositol 1,3,4-trisphosphate + ATP = 1D-myo-inositol 1,3,4,6-tetrakisphosphate + ADP + H(+). In terms of biological role, kinase that can phosphorylate various inositol polyphosphate such as Ins(3,4,5,6)P4 or Ins(1,3,4)P3 and participates in phytic acid biosynthesis in developing seeds. Phytic acid is the primary storage form of phosphorus in cereal grains and other plant seeds. This Oryza sativa subsp. indica (Rice) protein is Inositol-tetrakisphosphate 1-kinase 2 (ITPK2).